The chain runs to 403 residues: G2/mitotic-specific cyclin-B3 (403 aa).

Disordered regions lie at residues 1 to 86 and 102 to 122; these read MPVA…APPA and RKTPPADVPVEPEKDSVPEEP. Over residues 7–25 the composition is skewed to polar residues; it reads SKAQSSKQPRASKAPSVTE. Positions 51–59 match the D-box motif; the sequence is RSAFGDITN.

This sequence belongs to the cyclin family. Cyclin AB subfamily. In terms of assembly, interacts with the CDK1 and CDK2 protein kinases. Post-translationally, ubiquitinated, leading to its degradation.

Its subcellular location is the nucleus. Functionally, cyclins are positive regulatory subunits of the cyclin-dependent kinases (CDKs), and thereby play an essential role in the control of the cell cycle, notably via their destruction during cell division. Could be involved at the G2/M (mitosis or meiosis) transition. G2/M cyclins accumulate steadily during G2 and are abruptly destroyed at mitosis. The sequence is that of G2/mitotic-specific cyclin-B3 (CCNB3) from Gallus gallus (Chicken).